A 958-amino-acid polypeptide reads, in one-letter code: MERRAEAPPPPQGLDFTVENVEKALHQLYYDPNIENKNLAQKWLMQAQVSPQAWHFSWLLLNMDKVPEIQYSAPAPCTSRSPATGTTSLPDQYESLKSQLFTHITRFAGGSKIVLTRLCVALASLALSMMPEAWPCAVADMVRMFQAEDSNVDGRARCLALLELLTVLPEEFQTSRLPQYRKGQVRSVLAQECGSVFPLLEQLLQQQDSPGFIKQKVLKCFSSWVQLEIPLMDCENLIQAAFTSLQDPELFDTAVEAVVNAISQPDAQRYVNTLLKLIPPVLGLQEQLRQAVQSGDMETSHGICRIAVALGENHSRALLDQVEHWQSFLALVNMIMFCTGIPGHYPVNETTSSLTLTFWYTLQDDILSFEPDKQAVYQQVYRPVYFQLVDVLLHKAQFPSDEEYGFWSSDEKEQFRIYRVDISDTLMYVYEMLGAELLSSLYDKLGRLLTNTEQPSTWQHTEALLYGFQSIAETIDVNYSDVVPGLIGLIPRISISNVQLADTVMFTIGALSEWLADHPVMINNVLPLVLQALGNPELSISSVSTLKKICRECKYDLPPYAANIVAVSQEVLMKQIHKTSQCMWLMQALGFLLSALQVEEILKNLHSLITPYIQQLEKLADETPNPSNKLAIIHILGLLSNLFTTLDISHHDDDHESTEVKKLPVQQGPNPVVVVLQQVFQLIQKVLSKWLNDAQVVESVCAIFEKSVKTLLDDFAPMVPQLCEMLGQMYSTIPQASAIDLTRQLVHIFAHEPAHFPPIKALFLLVTSVTLTLFQQGPRDHPDIVDSFMQLLAQALKRKPDLFLCSNLDVKALFHCGVLSLKFPEAPTVKASCGFFTELLPRCGEIAPVGQVVHENGKVLLQAVLEGVGGQASRSLMDHFAEILFALNKHCFSYLSIWIKEAMQQDGFPSARVSPEQKETFSQQILRERVNKRRVKEMVKEFTLLCRGLHGTEYTADY.

20 HEAT repeats span residues 19-49, 51-83, 90-130, 137-174, 189-226, 231-263, 271-320, 325-367, 370-433, 435-471, 482-517, 519-553, 557-595, 598-643, 671-711, 715-749, 756-798, 810-840, 855-888, and 892-926; these read ENVE…QAQV, PQAW…RSPA, PDQY…LSMM, AVAD…EFQT, LAQE…SWVQ, LMDC…NAIS, VNTL…ALLD, WQSF…DDIL, EPDK…YEML, AELL…FQSI, VVPG…WLAD, PVMI…CREC, LPPY…LLSA, VEEI…SNLF, PVVV…VKTL, FAPM…VHIF, FPPI…ALKR, VKAL…TELL, ENGK…FALN, and FSYL…QQIL. The region spanning 40 to 106 is the Importin N-terminal domain; it reads AQKWLMQAQV…KSQLFTHITR (67 aa).

It belongs to the importin beta family.

It localises to the cytoplasm. The protein localises to the nucleus. Its function is as follows. Functions in nuclear protein import as nuclear transport receptor. Serves as receptor for nuclear localization signals (NLS) in cargo substrates. Is thought to mediate docking of the importin/substrate complex to the nuclear pore complex (NPC) through binding to nucleoporin and the complex is subsequently translocated through the pore by an energy requiring, Ran-dependent mechanism. At the nucleoplasmic side of the NPC, Ran binds to the importin, the importin/substrate complex dissociates and importin is re-exported from the nucleus to the cytoplasm where GTP hydrolysis releases Ran. The directionality of nuclear import is thought to be conferred by an asymmetric distribution of the GTP- and GDP-bound forms of Ran between the cytoplasm and nucleus. This Gallus gallus (Chicken) protein is Importin-13 (IPO13).